Here is a 362-residue protein sequence, read N- to C-terminus: Dihydroorotate dehydrogenase (quinone) (362 aa).

FMN is bound by residues 60-64 (AGFDK) and T84. K64 contributes to the substrate binding site. Position 109–113 (109–113 (NRMGF)) interacts with substrate. The FMN site is built by N137 and N168. Residue N168 participates in substrate binding. S171 (nucleophile) is an active-site residue. N173 is a binding site for substrate. FMN contacts are provided by K213 and S241. 242–243 (NT) lines the substrate pocket. Residues G264, G293, and 314–315 (YS) each bind FMN.

The protein belongs to the dihydroorotate dehydrogenase family. Type 2 subfamily. In terms of assembly, monomer. It depends on FMN as a cofactor.

It localises to the cell membrane. The enzyme catalyses (S)-dihydroorotate + a quinone = orotate + a quinol. Its pathway is pyrimidine metabolism; UMP biosynthesis via de novo pathway; orotate from (S)-dihydroorotate (quinone route): step 1/1. Functionally, catalyzes the conversion of dihydroorotate to orotate with quinone as electron acceptor. In Bartonella henselae (strain ATCC 49882 / DSM 28221 / CCUG 30454 / Houston 1) (Rochalimaea henselae), this protein is Dihydroorotate dehydrogenase (quinone).